The chain runs to 288 residues: Thiamine-monophosphate kinase (288 aa).

Mg(2+)-binding residues include aspartate 20, threonine 30, and aspartate 32. A substrate-binding site is contributed by aspartate 39. Mg(2+)-binding residues include aspartate 60 and aspartate 107. Residues 106–107 (GD) and arginine 130 each bind ATP. Position 188 (aspartate 188) interacts with Mg(2+). Serine 190 is an ATP binding site. Aspartate 191 provides a ligand contact to Mg(2+). Tryptophan 286 lines the substrate pocket.

This sequence belongs to the thiamine-monophosphate kinase family.

It catalyses the reaction thiamine phosphate + ATP = thiamine diphosphate + ADP. It functions in the pathway cofactor biosynthesis; thiamine diphosphate biosynthesis; thiamine diphosphate from thiamine phosphate: step 1/1. Catalyzes the ATP-dependent phosphorylation of thiamine-monophosphate (TMP) to form thiamine-pyrophosphate (TPP), the active form of vitamin B1. In Halobacterium salinarum (strain ATCC 700922 / JCM 11081 / NRC-1) (Halobacterium halobium), this protein is Thiamine-monophosphate kinase.